A 237-amino-acid chain; its full sequence is Thiamine-phosphate synthase (237 aa).

4-amino-2-methyl-5-(diphosphooxymethyl)pyrimidine-binding positions include 41–45 and asparagine 73; that span reads QLRDK. The Mg(2+) site is built by aspartate 74 and aspartate 93. Residue serine 112 participates in 4-amino-2-methyl-5-(diphosphooxymethyl)pyrimidine binding. 2-[(2R,5Z)-2-carboxy-4-methylthiazol-5(2H)-ylidene]ethyl phosphate is bound at residue 143–145; sequence TPT. A 4-amino-2-methyl-5-(diphosphooxymethyl)pyrimidine-binding site is contributed by lysine 146. Glycine 192 is a 2-[(2R,5Z)-2-carboxy-4-methylthiazol-5(2H)-ylidene]ethyl phosphate binding site.

It belongs to the thiamine-phosphate synthase family. It depends on Mg(2+) as a cofactor.

The enzyme catalyses 2-[(2R,5Z)-2-carboxy-4-methylthiazol-5(2H)-ylidene]ethyl phosphate + 4-amino-2-methyl-5-(diphosphooxymethyl)pyrimidine + 2 H(+) = thiamine phosphate + CO2 + diphosphate. It catalyses the reaction 2-(2-carboxy-4-methylthiazol-5-yl)ethyl phosphate + 4-amino-2-methyl-5-(diphosphooxymethyl)pyrimidine + 2 H(+) = thiamine phosphate + CO2 + diphosphate. It carries out the reaction 4-methyl-5-(2-phosphooxyethyl)-thiazole + 4-amino-2-methyl-5-(diphosphooxymethyl)pyrimidine + H(+) = thiamine phosphate + diphosphate. It participates in cofactor biosynthesis; thiamine diphosphate biosynthesis; thiamine phosphate from 4-amino-2-methyl-5-diphosphomethylpyrimidine and 4-methyl-5-(2-phosphoethyl)-thiazole: step 1/1. In terms of biological role, condenses 4-methyl-5-(beta-hydroxyethyl)thiazole monophosphate (THZ-P) and 2-methyl-4-amino-5-hydroxymethyl pyrimidine pyrophosphate (HMP-PP) to form thiamine monophosphate (TMP). This is Thiamine-phosphate synthase from Arthrobacter sp. (strain FB24).